Consider the following 221-residue polypeptide: Ras-related protein RABA5a (221 aa).

A GTP-binding site is contributed by 21 to 28; it reads GDSAVGKS. The short motif at 43–51 is the Effector region element; sequence SKSTIGVEF. GTP-binding positions include 69 to 73, 127 to 130, and 157 to 158; these read DTAGQ, NKSD, and SA. Residues C218 and C219 are each lipidated (S-geranylgeranyl cysteine).

The protein belongs to the small GTPase superfamily. Rab family.

The protein localises to the cell membrane. Intracellular vesicle trafficking and protein transport. The polypeptide is Ras-related protein RABA5a (RABA5A) (Arabidopsis thaliana (Mouse-ear cress)).